Reading from the N-terminus, the 360-residue chain is Isopentenyl-diphosphate delta-isomerase (360 aa).

Residue 12–13 (RK) participates in substrate binding. FMN contacts are provided by residues 69 to 71 (SMT), Ser99, and Asn130. 99 to 101 (SQR) serves as a coordination point for substrate. Gln164 is a substrate binding site. A Mg(2+)-binding site is contributed by Glu165. FMN-binding positions include Lys196, Thr226, 277 to 279 (GVR), and 298 to 299 (AK).

It belongs to the IPP isomerase type 2 family. Homooctamer. Dimer of tetramers. The cofactor is FMN. NADPH is required as a cofactor. Mg(2+) serves as cofactor.

The protein localises to the cytoplasm. The enzyme catalyses isopentenyl diphosphate = dimethylallyl diphosphate. Functionally, involved in the biosynthesis of isoprenoids. Catalyzes the 1,3-allylic rearrangement of the homoallylic substrate isopentenyl (IPP) to its allylic isomer, dimethylallyl diphosphate (DMAPP). The polypeptide is Isopentenyl-diphosphate delta-isomerase (Halobacterium salinarum (strain ATCC 700922 / JCM 11081 / NRC-1) (Halobacterium halobium)).